Here is a 163-residue protein sequence, read N- to C-terminus: 3-hydroxyacyl-[acyl-carrier-protein] dehydratase FabZ (163 aa).

H64 is a catalytic residue.

It belongs to the thioester dehydratase family. FabZ subfamily.

The protein localises to the cytoplasm. It carries out the reaction a (3R)-hydroxyacyl-[ACP] = a (2E)-enoyl-[ACP] + H2O. Its function is as follows. Involved in unsaturated fatty acids biosynthesis. Catalyzes the dehydration of short chain beta-hydroxyacyl-ACPs and long chain saturated and unsaturated beta-hydroxyacyl-ACPs. The chain is 3-hydroxyacyl-[acyl-carrier-protein] dehydratase FabZ from Caulobacter sp. (strain K31).